Consider the following 289-residue polypeptide: Nucleotide-binding protein FRAAL4592 (289 aa).

An ATP-binding site is contributed by 13-20 (GLSGAGRS). Position 64 to 67 (64 to 67 (DVRG)) interacts with GTP.

This sequence belongs to the RapZ-like family.

Its function is as follows. Displays ATPase and GTPase activities. The chain is Nucleotide-binding protein FRAAL4592 from Frankia alni (strain DSM 45986 / CECT 9034 / ACN14a).